The following is a 461-amino-acid chain: Photosystem II CP43 reaction center protein (461 aa).

Positions 1 to 2 (ME) are excised as a propeptide. T3 carries the post-translational modification N-acetylthreonine. The residue at position 3 (T3) is a Phosphothreonine. 5 consecutive transmembrane segments (helical) span residues 57-81 (LFEV…PHLA), 122-143 (LLGP…KDRN), 166-188 (KALY…RKIT), 243-263 (KPFA…LSYS), and 279-300 (WFNN…ASQA). E355 serves as a coordination point for [CaMn4O5] cluster. A helical membrane pass occupies residues 435-459 (RARAAAAGFEKGIDRDLEPVLSMTP).

Belongs to the PsbB/PsbC family. PsbC subfamily. PSII is composed of 1 copy each of membrane proteins PsbA, PsbB, PsbC, PsbD, PsbE, PsbF, PsbH, PsbI, PsbJ, PsbK, PsbL, PsbM, PsbT, PsbX, PsbY, PsbZ, Psb30/Ycf12, at least 3 peripheral proteins of the oxygen-evolving complex and a large number of cofactors. It forms dimeric complexes. Requires Binds multiple chlorophylls and provides some of the ligands for the Ca-4Mn-5O cluster of the oxygen-evolving complex. It may also provide a ligand for a Cl- that is required for oxygen evolution. PSII binds additional chlorophylls, carotenoids and specific lipids. as cofactor.

The protein resides in the plastid. It localises to the chloroplast thylakoid membrane. In terms of biological role, one of the components of the core complex of photosystem II (PSII). It binds chlorophyll and helps catalyze the primary light-induced photochemical processes of PSII. PSII is a light-driven water:plastoquinone oxidoreductase, using light energy to abstract electrons from H(2)O, generating O(2) and a proton gradient subsequently used for ATP formation. The protein is Photosystem II CP43 reaction center protein of Ceratophyllum demersum (Rigid hornwort).